Consider the following 591-residue polypeptide: L-fucose isomerase (591 aa).

Catalysis depends on proton acceptor residues glutamate 337 and aspartate 361. Mn(2+) is bound by residues glutamate 337, aspartate 361, and histidine 528.

The protein belongs to the L-fucose isomerase family. As to quaternary structure, homohexamer. Requires Mn(2+) as cofactor.

The protein localises to the cytoplasm. The catalysed reaction is L-fucose = L-fuculose. The protein operates within carbohydrate degradation; L-fucose degradation; L-lactaldehyde and glycerone phosphate from L-fucose: step 1/3. In terms of biological role, converts the aldose L-fucose into the corresponding ketose L-fuculose. The chain is L-fucose isomerase from Escherichia coli O17:K52:H18 (strain UMN026 / ExPEC).